Here is a 466-residue protein sequence, read N- to C-terminus: Lipase 2 (466 aa).

The N-terminal stretch at 1–16 is a signal peptide; that stretch reads MKGLVFLLGLLPTIYA. Cys-112 and Cys-285 form a disulfide bridge. The active-site Charge relay system is the Ser-196. Asn-231, Asn-319, and Asn-331 each carry an N-linked (GlcNAc...) asparagine glycan. Catalysis depends on charge relay system residues Asp-348 and His-381. Cys-364 and Cys-409 form a disulfide bridge. N-linked (GlcNAc...) asparagine glycosylation is found at Asn-422 and Asn-451.

This sequence belongs to the AB hydrolase superfamily. Lipase family. Class Lip subfamily.

It localises to the secreted. It catalyses the reaction a triacylglycerol + H2O = a diacylglycerol + a fatty acid + H(+). Its function is as follows. Secreted lipase that is able to hydrolyze both the neutral triacylglycerols and the monopalmitate ester Tween 40, allowing the use of hydrolyzed products as carbon sources. Has broad lipolytic activity, which may be important for colonization and subsequent infection, therefore contributing to the persistence and virulence in human tissue. My be important for alimentary tract colonization, but not oral infection. Facilitates invasive disease via lipid-based suppression of the IL-17 response. Inhibits IL-17 production indirectly by suppressing IL-23 production by tissue-resident dendritic cells. This Candida albicans (strain SC5314 / ATCC MYA-2876) (Yeast) protein is Lipase 2.